The sequence spans 262 residues: ATP synthase subunit a (262 aa).

6 helical membrane passes run A24–F44, V84–L104, D129–V149, P165–A185, L194–A214, and L228–L248.

This sequence belongs to the ATPase A chain family. In terms of assembly, F-type ATPases have 2 components, CF(1) - the catalytic core - and CF(0) - the membrane proton channel. CF(1) has five subunits: alpha(3), beta(3), gamma(1), delta(1), epsilon(1). CF(0) has three main subunits: a(1), b(2) and c(9-12). The alpha and beta chains form an alternating ring which encloses part of the gamma chain. CF(1) is attached to CF(0) by a central stalk formed by the gamma and epsilon chains, while a peripheral stalk is formed by the delta and b chains.

The protein localises to the cell inner membrane. Functionally, key component of the proton channel; it plays a direct role in the translocation of protons across the membrane. This is ATP synthase subunit a from Actinobacillus pleuropneumoniae serotype 7 (strain AP76).